Consider the following 538-residue polypeptide: Sterile alpha motif domain-containing protein 1 (538 aa).

Residues 1–11 (MAGPPALPPPE) are compositionally biased toward pro residues. Disordered regions lie at residues 1 to 30 (MAGPPALPPPETAAAATTAAAASSSAASPH) and 92 to 247 (SYRN…GAAR). Positions 12-29 (TAAAATTAAAASSSAASP) are enriched in low complexity. One can recognise an SAMD1-like winged helix (WH) domain in the interval 23-99 (SSSAASPHYQ…SISYRNAARV (77 aa)). A Phosphothreonine modification is found at T107. Residues 115–125 (PRGAPAAAAAA) are compositionally biased toward low complexity. Over residues 126 to 139 (APPPTPAPPPPPAP) the composition is skewed to pro residues. Low complexity predominate over residues 140-158 (VAAAAPARAPRAAAAAATA). A Phosphoserine modification is found at S161. Low complexity predominate over residues 168–177 (GPRAQRAAPL). The span at 178 to 236 (AAPPPAPAAPPAVAPPAGPRRAPPPAVAAREPPLPPPPQPPAPPQQQQPPPPQPQPPPE) shows a compositional bias: pro residues. Residues 237–247 (GGAVRAGGAAR) are compositionally biased toward low complexity. Residue S261 is modified to Phosphoserine. Basic and acidic residues predominate over residues 282–291 (AARGRLERTR). Residues 282–458 (AARGRLERTR…PPGRKEKPSD (177 aa)) form a disordered region. The span at 328 to 351 (KEEEEDDDEDEDEEDDVSEGSEVP) shows a compositional bias: acidic residues. The segment covering 425 to 436 (SPSPVPLPPGKP) has biased composition (pro residues). Residues 462-530 (WTVMDVVEYF…KVLQQGHFED (69 aa)) form the SAM domain.

As to quaternary structure, homopolymerize into a closed pentameric ring. Interacts (via SAM domain) with L3MBTL3 (via SAM domain); the interaction mediates L3MBTL3 binding to chromatin. Interacts (via WH domain) with KDM1A; the interaction modulates KDM1A function. Expressed in atherosclerotic lesions, not in normal intima. Expressed in foam cells.

It localises to the nucleus. It is found in the chromosome. Its subcellular location is the secreted. Its function is as follows. Unmethylated CpG islands (CGIs)-binding protein which localizes to H3K4me3-decorated CGIs, where it acts as a transcriptional repressor. Tethers L3MBTL3 to chromatin and interacts with the KDM1A histone demethylase complex to modulate H3K4me2 and H3K4me3 levels at CGIs. Plays a role in atherogenesis by binding with LDL on cell surface and promoting LDL oxidation which leads to the formation of foam cell. In Homo sapiens (Human), this protein is Sterile alpha motif domain-containing protein 1.